A 275-amino-acid chain; its full sequence is ATP synthase subunit a (275 aa).

A run of 7 helical transmembrane segments spans residues 46–66 (RLMLIRLLMSVLVAAFFVIAM), 104–124 (FLPVITTIFFIVVASNMASII), 135–155 (IGMPLVLAALAYIVFNYVGIK), 166–186 (SIVVPGVPLPLHFLLVPIEFI), 204–224 (MLAGHILLVLFFSATNYFFFV), 231–251 (IFGVPSIIAGIAFTFFELLVI), and 252–272 (FLQAYVFALLTAVYIELALHA).

The protein belongs to the ATPase A chain family. In terms of assembly, F-type ATPases have 2 components, CF(1) - the catalytic core - and CF(0) - the membrane proton channel. CF(1) has five subunits: alpha(3), beta(3), gamma(1), delta(1), epsilon(1). CF(0) has three main subunits: a(1), b(2) and c(9-12). The alpha and beta chains form an alternating ring which encloses part of the gamma chain. CF(1) is attached to CF(0) by a central stalk formed by the gamma and epsilon chains, while a peripheral stalk is formed by the delta and b chains.

The protein resides in the cell membrane. Its function is as follows. Key component of the proton channel; it plays a direct role in the translocation of protons across the membrane. This chain is ATP synthase subunit a, found in Rhodococcus erythropolis (strain PR4 / NBRC 100887).